The following is a 452-amino-acid chain: uncharacterized protein (452 aa).

A TRAM domain is found at 3–61 (KVKIGEKYEVDITSMGHEGEGVGRIDGIAVFVKGALKGERVIVEIEEVHKNYLKGYTVK). The [4Fe-4S] cluster site is built by Cys74, Cys80, Cys83, and Cys160. The S-adenosyl-L-methionine site is built by Gln284, Tyr313, Glu334, and Asp382. Cys409 functions as the Nucleophile in the catalytic mechanism.

This sequence belongs to the class I-like SAM-binding methyltransferase superfamily. RNA M5U methyltransferase family.

This is an uncharacterized protein from Caldanaerobacter subterraneus subsp. tengcongensis (strain DSM 15242 / JCM 11007 / NBRC 100824 / MB4) (Thermoanaerobacter tengcongensis).